Here is a 179-residue protein sequence, read N- to C-terminus: IMPACT family member in pol 5'region (179 aa).

Belongs to the IMPACT family.

The chain is IMPACT family member in pol 5'region from Thermus thermophilus.